Reading from the N-terminus, the 237-residue chain is Ribonuclease PH (237 aa).

Phosphate contacts are provided by residues Arg86 and 124–126 (GTR).

Belongs to the RNase PH family. In terms of assembly, homohexameric ring arranged as a trimer of dimers.

It catalyses the reaction tRNA(n+1) + phosphate = tRNA(n) + a ribonucleoside 5'-diphosphate. Phosphorolytic 3'-5' exoribonuclease that plays an important role in tRNA 3'-end maturation. Removes nucleotide residues following the 3'-CCA terminus of tRNAs; can also add nucleotides to the ends of RNA molecules by using nucleoside diphosphates as substrates, but this may not be physiologically important. Probably plays a role in initiation of 16S rRNA degradation (leading to ribosome degradation) during starvation. This Shewanella oneidensis (strain ATCC 700550 / JCM 31522 / CIP 106686 / LMG 19005 / NCIMB 14063 / MR-1) protein is Ribonuclease PH.